Reading from the N-terminus, the 2283-residue chain is AT-rich interactive domain-containing protein 1A (2283 aa).

Positions 1–10 (MAAQVAPAAA) are enriched in low complexity. 3 disordered regions span residues 1–333 (MAAQ…PADM), 346–822 (AAAA…LPNA), and 979–1006 (ATKMNNKADGTPKTESKSKKSSSSTTTN). At A2 the chain carries N-acetylalanine. The span at 22–34 (ELKKAEQQQREEA) shows a compositional bias: basic and acidic residues. Phosphoserine occurs at positions 56 and 77. The segment covering 77-93 (SNGGGGGGGAGSGGGPG) has biased composition (gly residues). Low complexity-rich tracts occupy residues 128–143 (SSSDGVGAPPHSAAAA) and 233–266 (SSPRGGTPGSGAAAAAGSKPPPSSSASASSSSSS). Position 234 is a phosphoserine (S234). The segment covering 274 to 287 (AMGGGGPSAAGGGT) has biased composition (gly residues). Residue T287 is modified to Phosphothreonine. An LXXLL motif is present at residues 296–300 (LNQLL). Positions 296 to 307 (LNQLLTSPSSAR) are enriched in polar residues. A Phosphoserine modification is found at S302. Over residues 311–328 (GYPGGDYGGGPQDGGAGK) the composition is skewed to gly residues. S365 and S384 each carry phosphoserine. The span at 402 to 427 (PYSQQQGPPSGPQQGHGYPGQPYGSQ) shows a compositional bias: low complexity. Position 431 is an asymmetric dimethylarginine (R431). Polar residues-rich tracts occupy residues 438–451 (GRAQSAMGSLSYAQ) and 459–470 (QGPSAYGQQGQT). 2 stretches are compositionally biased toward low complexity: residues 471–547 (PYYN…QHPQ) and 554–596 (QPQA…YSQQ). Residue S605 is modified to Phosphoserine. The span at 611-622 (SQASSAPSMTSS) shows a compositional bias: low complexity. Residues 629-638 (MNLSLQSRPS) are compositionally biased toward polar residues. The segment covering 659-675 (SPGVSTSGISSSQGEQS) has biased composition (low complexity). Over residues 676 to 686 (NPAQSPFSPHT) the composition is skewed to polar residues. S697, S699, S703, S731, S765, and S773 each carry phosphoserine. 2 stretches are compositionally biased toward polar residues: residues 731 to 748 (SGQSDSIMHPSMNQSSIA) and 756 to 794 (RNPQMPQYTSPQPGSALSPRQPSGGQMHSGVGSYQQNSM). A compositionally biased stretch (low complexity) spans 795–822 (GSYGPQGSQYGPQGGYPRQPNYNALPNA). Residues 1018-1109 (EPERKMWVDR…CLYAFECKIE (92 aa)) form the ARID domain. Disordered stretches follow at residues 1114 to 1484 (PPPD…MMGG) and 1539 to 1636 (RANH…PPMI). Residues 1142-1155 (MQGPQTPQSTSSSM) show a composition bias toward low complexity. A compositionally biased stretch (pro residues) spans 1163–1178 (PPTPASTPHSQIPPLP). S1185 is subject to Phosphoserine. Residues 1198–1220 (PTFQKRNSMTPNPGYQPSMNTSD) are compositionally biased toward polar residues. Position 1236 is a phosphoserine (S1236). R1277 is subject to Omega-N-methylarginine. The span at 1343–1368 (QFSTQGTPSSSPFPSQQTTMYQQQQQ) shows a compositional bias: low complexity. The Nuclear localization signal motif lies at 1369-1388 (NYKRPMDGTYGPPAKRHEGE). Positions 1395–1426 (SAGQGQPQQQQLPAAQSQPASQPQAAQPSPQQ) are enriched in low complexity. 2 stretches are compositionally biased toward polar residues: residues 1427–1436 (DVYNQYSNAY) and 1469–1478 (PGSSAQQNMP). The segment covering 1555–1579 (PYGPSAPVPPMTRPPPSNYQPPPSM) has biased composition (pro residues). A Phosphoserine modification is found at S1605. At K1613 the chain carries N6-acetyllysine. An LXXLL motif is present at residues 1710–1714 (LPGLL). Disordered regions lie at residues 1757–1782 (PAHTEEEEEEHLDPKLEEEEEEGVGN), 1872–1904 (CPTPPRKHLTTVEGTPGTTEQEGPPPDGLPEKR), and 1917–1941 (SSTLTDEGAKSAEATKESSKFPFGI). A compositionally biased stretch (acidic residues) spans 1761 to 1782 (EEEEEEHLDPKLEEEEEEGVGN). Phosphothreonine occurs at positions 1874 and 1886. Positions 1882 to 1893 (TVEGTPGTTEQE) are enriched in low complexity. K1903 is modified (N6-acetyllysine). Positions 1923–1935 (EGAKSAEATKESS) are enriched in basic and acidic residues. A phosphoserine mark is found at S1927 and S1942. 2 short sequence motifs (LXXLL) span residues 1965–1969 (LCTLL) and 2083–2087 (LDGLL).

As to quaternary structure, component of SWI/SNF chromatin remodeling complexes, in some of which it can be mutually exclusive with ARID1B/BAF250B. The canonical complex contains a catalytic subunit (either SMARCA4/BRG1/BAF190A or SMARCA2/BRM/BAF190B) and at least SMARCE1, ACTL6A/BAF53, SMARCC1/BAF155, SMARCC2/BAF170, and SMARCB1/SNF5/BAF47. Other subunits specific to each of the complexes may also be present permitting several possible combinations developmentally and tissue specific. Component of the BAF (SWI/SNF-A) complex, which includes at least actin (ACTB), ARID1A/BAF250A, ARID1B/BAF250B, SMARCA2/BRM, SMARCA4/BRG1/BAF190A, ACTL6A/BAF53, ACTL6B/BAF53B, SMARCE1/BAF57, SMARCC1/BAF155, SMARCC2/BAF170, SMARCB1/SNF5/INI1, and one or more SMARCD1/BAF60A, SMARCD2/BAF60B, or SMARCD3/BAF60C. In muscle cells, the BAF complex also contains DPF3. Component of neural progenitors-specific chromatin remodeling complex (npBAF complex) composed of at least, ARID1A/BAF250A or ARID1B/BAF250B, SMARCD1/BAF60A, SMARCD3/BAF60C, SMARCA2/BRM/BAF190B, SMARCA4/BRG1/BAF190A, SMARCB1/BAF47, SMARCC1/BAF155, SMARCE1/BAF57, SMARCC2/BAF170, PHF10/BAF45A, ACTL6A/BAF53A and actin. Component of neuron-specific chromatin remodeling complex (nBAF complex) composed of at least, ARID1A/BAF250A or ARID1B/BAF250B, SMARCD1/BAF60A, SMARCD3/BAF60C, SMARCA2/BRM/BAF190B, SMARCA4/BRG1/BAF190A, SMARCB1/BAF47, SMARCC1/BAF155, SMARCE1/BAF57, SMARCC2/BAF170, DPF1/BAF45B, DPF3/BAF45C, ACTL6B/BAF53B and actin. Component of a SWI/SNF-like EBAFa complex, at least composed of SMARCA4/BRG1/BAF190A, SMARCB1/BAF47/SNF5, ACTL6A/BAF53A, SMARCE1/BAF57, SMARCD1/BAF60A, SMARCC1/BAF155, SMARCC2/BAF170, BAF250A and MLLT1/ENL. Interacts through its C-terminus with SMARCA2/BRM/BAF190B and SMARCA4/BRG1/BAF190A. Interacts with SMARCC1/BAF155. Interacts with FOS (via bZIP domain and leucine-zipper region), FOSB isoform 1 and 2, FOSL1 and FOSL2. In terms of tissue distribution, widely expressed. Expressed at high levels in the testis.

The protein localises to the nucleus. In terms of biological role, involved in transcriptional activation and repression of select genes by chromatin remodeling (alteration of DNA-nucleosome topology). Component of SWI/SNF chromatin remodeling complexes that carry out key enzymatic activities, changing chromatin structure by altering DNA-histone contacts within a nucleosome in an ATP-dependent manner. Binds DNA non-specifically. Belongs to the neural progenitors-specific chromatin remodeling complex (npBAF complex) and the neuron-specific chromatin remodeling complex (nBAF complex). During neural development a switch from a stem/progenitor to a postmitotic chromatin remodeling mechanism occurs as neurons exit the cell cycle and become committed to their adult state. The transition from proliferating neural stem/progenitor cells to postmitotic neurons requires a switch in subunit composition of the npBAF and nBAF complexes. As neural progenitors exit mitosis and differentiate into neurons, npBAF complexes which contain ACTL6A/BAF53A and PHF10/BAF45A, are exchanged for homologous alternative ACTL6B/BAF53B and DPF1/BAF45B or DPF3/BAF45C subunits in neuron-specific complexes (nBAF). The npBAF complex is essential for the self-renewal/proliferative capacity of the multipotent neural stem cells. The nBAF complex along with CREST plays a role regulating the activity of genes essential for dendrite growth. The protein is AT-rich interactive domain-containing protein 1A (Arid1a) of Mus musculus (Mouse).